A 748-amino-acid polypeptide reads, in one-letter code: LPS-assembly protein LptD (748 aa).

An N-terminal signal peptide occupies residues 1–19 (MSKTWGILMLSVLSAPSLA).

This sequence belongs to the LptD family. In terms of assembly, component of the lipopolysaccharide transport and assembly complex. Interacts with LptE and LptA.

The protein localises to the cell outer membrane. Functionally, together with LptE, is involved in the assembly of lipopolysaccharide (LPS) at the surface of the outer membrane. The sequence is that of LPS-assembly protein LptD from Pseudoalteromonas translucida (strain TAC 125).